The sequence spans 421 residues: Histidine--tRNA ligase (421 aa).

Belongs to the class-II aminoacyl-tRNA synthetase family. Homodimer.

It localises to the cytoplasm. It catalyses the reaction tRNA(His) + L-histidine + ATP = L-histidyl-tRNA(His) + AMP + diphosphate + H(+). This chain is Histidine--tRNA ligase, found in Francisella tularensis subsp. holarctica (strain OSU18).